The chain runs to 184 residues: Lactoylglutathione lyase (184 aa).

An N-acetylalanine modification is found at A2. C19 and C20 are joined by a disulfide. Residues 31–177 (LLQQTMLRVK…DGYWIEILNP (147 aa)) enclose the VOC domain. Substrate-binding residues include Q34 and R38. Q34 is a Zn(2+) binding site. A disulfide bridge connects residues C61 and C139. K88 bears the N6-succinyllysine mark. E100 is a binding site for Zn(2+). Residue N104 participates in substrate binding. T107 is modified (phosphothreonine). The substrate site is built by R123 and H127. Residue H127 participates in Zn(2+) binding. C139 is modified (S-glutathionyl cysteine; alternate). K148 carries the N6-acetyllysine; alternate modification. K148 carries the N6-succinyllysine; alternate modification. Position 157-158 (157-158 (KM)) interacts with substrate. E173 provides a ligand contact to Zn(2+). The active-site Proton donor/acceptor is E173.

It belongs to the glyoxalase I family. As to quaternary structure, homodimer. Requires Zn(2+) as cofactor. Post-translationally, glutathionylation at Cys-139 inhibits enzyme activity. Phosphorylated at Thr-107 in the presence of CaMK2. However, this is a consensus site for phosphorylation by CK2 so phosphorylation may be mediated by CK2 rather than CaMK2. Phosphorylation is induced by TNF and suppresses the TNF-induced transcriptional activity of NF-kappa-B. In terms of processing, exists in a nitric oxide (NO)-modified form. The exact nature of the modification is unknown, but it suppresses the TNF-induced transcriptional activity of NF-kappa-B.

It carries out the reaction (R)-S-lactoylglutathione = methylglyoxal + glutathione. The protein operates within secondary metabolite metabolism; methylglyoxal degradation; (R)-lactate from methylglyoxal: step 1/2. Regulated by oxidation of Cys-139 in response to the redox state of the cell. Results in the alternative formation of cystine or glutathione-bound cysteine, the latter modification leading to reduced enzyme activity. In terms of biological role, catalyzes the conversion of hemimercaptal, formed from methylglyoxal and glutathione, to S-lactoylglutathione. Involved in the regulation of TNF-induced transcriptional activity of NF-kappa-B. Required for normal osteoclastogenesis. The chain is Lactoylglutathione lyase (GLO1) from Homo sapiens (Human).